The sequence spans 763 residues: Heat shock 70 kDa protein 16 (763 aa).

2 disordered regions span residues 509–529 (ISEENHQSSAMKDGSLDPSSG) and 701–763 (EKTT…MELD). The residue at position 528 (S528) is a Phosphoserine. The span at 701-714 (EKTTEQESLPKDAN) shows a compositional bias: basic and acidic residues.

The protein belongs to the heat shock protein 70 (TC 1.A.33) family. HSP110/SSE subfamily.

The sequence is that of Heat shock 70 kDa protein 16 (HSP70-16) from Arabidopsis thaliana (Mouse-ear cress).